Consider the following 568-residue polypeptide: Urease subunit alpha (568 aa).

The Urease domain maps to 130 to 568; it reads GGIDTHIHFI…LPMAQRYFLF (439 aa). Positions 135, 137, and 218 each coordinate Ni(2+). N6-carboxylysine is present on Lys-218. His-220 contacts substrate. 2 residues coordinate Ni(2+): His-247 and His-273. His-321 functions as the Proton donor in the catalytic mechanism. Ni(2+) is bound at residue Asp-361.

It belongs to the metallo-dependent hydrolases superfamily. Urease alpha subunit family. Heterotrimer of UreA (gamma), UreB (beta) and UreC (alpha) subunits. Three heterotrimers associate to form the active enzyme. The cofactor is Ni cation. Carboxylation allows a single lysine to coordinate two nickel ions.

The protein localises to the cytoplasm. The catalysed reaction is urea + 2 H2O + H(+) = hydrogencarbonate + 2 NH4(+). Its pathway is nitrogen metabolism; urea degradation; CO(2) and NH(3) from urea (urease route): step 1/1. This chain is Urease subunit alpha, found in Burkholderia vietnamiensis (strain G4 / LMG 22486) (Burkholderia cepacia (strain R1808)).